A 172-amino-acid polypeptide reads, in one-letter code: Translation initiation factor IF-3 (172 aa).

The protein belongs to the IF-3 family. In terms of assembly, monomer.

It localises to the cytoplasm. IF-3 binds to the 30S ribosomal subunit and shifts the equilibrium between 70S ribosomes and their 50S and 30S subunits in favor of the free subunits, thus enhancing the availability of 30S subunits on which protein synthesis initiation begins. The sequence is that of Translation initiation factor IF-3 from Sulfurimonas denitrificans (strain ATCC 33889 / DSM 1251) (Thiomicrospira denitrificans (strain ATCC 33889 / DSM 1251)).